The following is a 26-amino-acid chain: Oxyopinin-3a (26 aa).

Expressed by the venom gland.

It is found in the secreted. In terms of biological role, may have cytolytic and antimicrobial activity. This is Oxyopinin-3a from Oxyopes takobius (Lynx spider).